The primary structure comprises 158 residues: Proteinase inhibitor type-2 (158 aa).

The signal sequence occupies residues 1-24; sequence MAIHKEVSFLAYLLVLGMLLFVSA. 2 consecutive repeat copies span residues 29–86 and 87–146. Intrachain disulfides connect C33–C121, C37–C117, C45–C127, C57–C94, C60–C78, C61–C90, C67–C103, and C120–C138.

It belongs to the protease inhibitor I20 (potato type II proteinase inhibitor) family.

The chain is Proteinase inhibitor type-2 from Solanum tuberosum (Potato).